The sequence spans 165 residues: Type 3 secretion system regulator YopR (165 aa).

The protein belongs to the YopR family.

It localises to the secreted. Its function is as follows. May be involved in the regulation of the assembly of the type III secretion system (T3SS), also called injectisome, which is used to inject bacterial effector proteins into eukaryotic host cells. May control the secretion and/or polymerization of YscF/SctF, the principal component of the needle filament, thereby impacting the assembly of the T3SS. Involved in pathogenesis. This is Type 3 secretion system regulator YopR from Yersinia pseudotuberculosis serotype I (strain IP32953).